A 350-amino-acid chain; its full sequence is Hydroxymethylglutaryl-CoA synthase (350 aa).

E83 (proton donor/acceptor) is an active-site residue. C115 (acyl-thioester intermediate) is an active-site residue. The (3S)-3-hydroxy-3-methylglutaryl-CoA site is built by C115 and T156. R204 lines the CoA pocket. T206 and H239 together coordinate (3S)-3-hydroxy-3-methylglutaryl-CoA. The active-site Proton donor/acceptor is H239. K244 contributes to the CoA binding site. 2 residues coordinate (3S)-3-hydroxy-3-methylglutaryl-CoA: N271 and S301.

This sequence belongs to the thiolase-like superfamily. Archaeal HMG-CoA synthase family. In terms of assembly, interacts with acetoacetyl-CoA thiolase that catalyzes the precedent step in the pathway and with a DUF35 protein. The acetoacetyl-CoA thiolase/HMG-CoA synthase complex channels the intermediate via a fused CoA-binding site, which allows for efficient coupling of the endergonic thiolase reaction with the exergonic HMGCS reaction.

It carries out the reaction acetoacetyl-CoA + acetyl-CoA + H2O = (3S)-3-hydroxy-3-methylglutaryl-CoA + CoA + H(+). It participates in metabolic intermediate biosynthesis; (R)-mevalonate biosynthesis; (R)-mevalonate from acetyl-CoA: step 2/3. Catalyzes the condensation of acetyl-CoA with acetoacetyl-CoA to form 3-hydroxy-3-methylglutaryl-CoA (HMG-CoA). Functions in the mevalonate (MVA) pathway leading to isopentenyl diphosphate (IPP), a key precursor for the biosynthesis of isoprenoid compounds that are building blocks of archaeal membrane lipids. This chain is Hydroxymethylglutaryl-CoA synthase, found in Pyrococcus horikoshii (strain ATCC 700860 / DSM 12428 / JCM 9974 / NBRC 100139 / OT-3).